The chain runs to 626 residues: Biosynthetic arginine decarboxylase (626 aa).

Lys-99 is modified (N6-(pyridoxal phosphate)lysine). 279-289 (VDVGGGLGVDY) contributes to the substrate binding site.

The protein belongs to the Orn/Lys/Arg decarboxylase class-II family. SpeA subfamily. The cofactor is Mg(2+). Requires pyridoxal 5'-phosphate as cofactor.

It catalyses the reaction L-arginine + H(+) = agmatine + CO2. It functions in the pathway amine and polyamine biosynthesis; agmatine biosynthesis; agmatine from L-arginine: step 1/1. In terms of biological role, catalyzes the biosynthesis of agmatine from arginine. The protein is Biosynthetic arginine decarboxylase of Chromobacterium violaceum (strain ATCC 12472 / DSM 30191 / JCM 1249 / CCUG 213 / NBRC 12614 / NCIMB 9131 / NCTC 9757 / MK).